Consider the following 103-residue polypeptide: Urease subunit beta (103 aa).

The protein belongs to the urease beta subunit family. Heterotrimer of UreA (gamma), UreB (beta) and UreC (alpha) subunits. Three heterotrimers associate to form the active enzyme.

Its subcellular location is the cytoplasm. The catalysed reaction is urea + 2 H2O + H(+) = hydrogencarbonate + 2 NH4(+). Its pathway is nitrogen metabolism; urea degradation; CO(2) and NH(3) from urea (urease route): step 1/1. The polypeptide is Urease subunit beta (Blochmanniella floridana).